The chain runs to 272 residues: Phosphatidylglycerol--prolipoprotein diacylglyceryl transferase (272 aa).

7 consecutive transmembrane segments (helical) span residues 17-37 (LAIRWYGLMYLAGFIMFLGFG), 59-79 (MLFFGVLGVILGGRLGYVLFY), 95-115 (WEGGMAFHGGFLGVVVAMWLF), 129-149 (FIAPMIPCGLAAGRIGNFING), 176-196 (SQLYQFAGEGVALFIVLWLFA), 202-222 (MGAVSGVFLIGYGAFRFAAEF), and 237-257 (LSMGQWLSLPMILAGIAMVVW). R142 contacts a 1,2-diacyl-sn-glycero-3-phospho-(1'-sn-glycerol).

It belongs to the Lgt family.

The protein localises to the cell inner membrane. It carries out the reaction L-cysteinyl-[prolipoprotein] + a 1,2-diacyl-sn-glycero-3-phospho-(1'-sn-glycerol) = an S-1,2-diacyl-sn-glyceryl-L-cysteinyl-[prolipoprotein] + sn-glycerol 1-phosphate + H(+). The protein operates within protein modification; lipoprotein biosynthesis (diacylglyceryl transfer). In terms of biological role, catalyzes the transfer of the diacylglyceryl group from phosphatidylglycerol to the sulfhydryl group of the N-terminal cysteine of a prolipoprotein, the first step in the formation of mature lipoproteins. The sequence is that of Phosphatidylglycerol--prolipoprotein diacylglyceryl transferase from Cupriavidus necator (strain ATCC 17699 / DSM 428 / KCTC 22496 / NCIMB 10442 / H16 / Stanier 337) (Ralstonia eutropha).